A 356-amino-acid chain; its full sequence is Putative [LysW]-L-2-aminoadipate/[LysW]-L-glutamate phosphate reductase (356 aa).

11–14 (SGYT) contacts NADP(+). Cysteine 157 is a catalytic residue. Asparagine 323 provides a ligand contact to NADP(+).

The protein belongs to the NAGSA dehydrogenase family. Type 1 subfamily. LysY sub-subfamily.

It is found in the cytoplasm. The catalysed reaction is [amino-group carrier protein]-C-terminal-N-(1-carboxy-5-oxopentan-1-yl)-L-glutamine + phosphate + NADP(+) = [amino-group carrier protein]-C-terminal-N-(1-carboxy-5-phosphooxy-5-oxopentan-1-yl)-L-glutamine + NADPH + H(+). It catalyses the reaction [amino-group carrier protein]-C-terminal-gamma-(L-glutamyl-5-semialdehyde)-L-glutamate + phosphate + NADP(+) = [amino-group carrier protein]-C-terminal-gamma-(5-phospho-L-glutamyl)-L-glutamate + NADPH + H(+). It functions in the pathway amino-acid biosynthesis; L-lysine biosynthesis via AAA pathway; L-lysine from L-alpha-aminoadipate (Thermus route): step 3/5. Its pathway is amino-acid biosynthesis; L-arginine biosynthesis. Functionally, involved in both the arginine and lysine biosynthetic pathways. The sequence is that of Putative [LysW]-L-2-aminoadipate/[LysW]-L-glutamate phosphate reductase from Ignicoccus hospitalis (strain KIN4/I / DSM 18386 / JCM 14125).